Reading from the N-terminus, the 221-residue chain is Vesicle-associated membrane protein 713 (221 aa).

Position 2 is an N-acetylalanine (alanine 2). Residues 2–190 are Cytoplasmic-facing; the sequence is AIIFALVARG…RTIMWWRNVK (189 aa). The Longin domain occupies 7 to 112; it reads LVARGTVVLS…SMNDEFSRVL (106 aa). The 61-residue stretch at 127–187 folds into the v-SNARE coiled-coil homology domain; sequence RMSRIKGEMS…RRYRTIMWWR (61 aa). The chain crosses the membrane as a helical; Anchor for type IV membrane protein span at residues 191–211; sequence LTIALILVLALVVYIAMAFVC. Residues 212–221 lie on the Vesicular side of the membrane; sequence HGPSLPSCFK.

It belongs to the synaptobrevin family. In terms of assembly, interacts with subunits of the vacuole protein sorting (HOPS) complex including VPS11, VCL1, VPS18, VPS33, VPS39 and VPS41. As to expression, highly expressed in stems and roots. Detected in flowers and leaves.

It localises to the vacuole membrane. It is found in the prevacuolar compartment membrane. Functionally, involved in the targeting and/or fusion of transport vesicles to their target membrane. The polypeptide is Vesicle-associated membrane protein 713 (Arabidopsis thaliana (Mouse-ear cress)).